Here is a 61-residue protein sequence, read N- to C-terminus: Photosystem II reaction center protein K (61 aa).

The propeptide occupies 1–24; that stretch reads MPNILSLTCICFNSVIYPTSFFFA. The chain crosses the membrane as a helical span at residues 32–52; that stretch reads IFNPIVDFMPVIPLFFFLLAF.

The protein belongs to the PsbK family. PSII is composed of 1 copy each of membrane proteins PsbA, PsbB, PsbC, PsbD, PsbE, PsbF, PsbH, PsbI, PsbJ, PsbK, PsbL, PsbM, PsbT, PsbX, PsbY, PsbZ, Psb30/Ycf12, at least 3 peripheral proteins of the oxygen-evolving complex and a large number of cofactors. It forms dimeric complexes.

Its subcellular location is the plastid. It is found in the chloroplast thylakoid membrane. Functionally, one of the components of the core complex of photosystem II (PSII). PSII is a light-driven water:plastoquinone oxidoreductase that uses light energy to abstract electrons from H(2)O, generating O(2) and a proton gradient subsequently used for ATP formation. It consists of a core antenna complex that captures photons, and an electron transfer chain that converts photonic excitation into a charge separation. The sequence is that of Photosystem II reaction center protein K from Triticum aestivum (Wheat).